A 2896-amino-acid polypeptide reads, in one-letter code: NLIRKDVDALSEDEVLNLQVALRAMQDDETPTGYQAIAAYHGEPADCKAPDGSTVVCCLHGMPTFPLWHRLYTVQFEQTMVAHGSKLGVPYWDWTQPLNHLPELVSHPLFMDPTAHKAKKNVFYSGDIAFEKKTTARAVDTRLFQASKGGKNFLLEGVLSALEQDDYCHFEVQFEVAHNPIHYLVGGRFTHSMSSLEYTSYDPLFFLHHSNVERLFTIWQALQKHRGLDGNANCGLNMFHKPMEPFGRDTNPISLTKEHAKAVDVFNYNELGYDYDDLHLNGMDIPELDTMLKERQQHPRSFANFRLGGIKTSANVRVAVCIPSEDKRHSDNCNNHVGSFFILGGVHEMTWDFGYPFLFEITDVVKSLGIPLDGNYYVHADVTEINGTLLPDGTIPRPTVSYIPHNFKDADMVVVDKTGLNVRKDLQSLTTEEEYELRVAMERFMDDKSIDGYQALAEFHGLPAKCPEPDAINRVACCVHGMSTFPHWHRLVVMQFEDALLARGSPIGVPYWDWTTPSSSLPHLVAVETYEDPYTKEVKPNPFYHAQIEFLHNDVFTARNVDSRLFEKPTKGHHGYLHDGMLLAFEQEDFCDFEVQFEVTHNAIHAWVGGNEPYSMSSLHYTSFDPLFWLHHSQVDRLWAVWQALQIYRGKPYKPYCALSEVHRPLKPFAFEPPLNNNKHTHSHSVPTHVYDYQSDLHYTYDTLFFGGMSVRELQRHIEEDKAKDRVFVGFLLMGIKTSANVVINVESAGNTYMAGTITILGGSKEMEWRFDRLYKYEITDALAELGVDMHAEYSINLQINDINGTALPPTSIPDPIVIFSPGKKESGVVFDELYRSRRDVSSLTDADMNALRKALQAYEDDKDASGYQQVAAFHGSTKWCPSPDAEVKYACCHHGMATFPHWHRLLTVNFENGLRHNGYQNGIPYWDWTRPLSELPTLVKDETYADENGETHPNPFFSGVIDEIGEHTTRSPNPTLFLKPPFGHFTPLGDEVMYALEQEDFCSFEVQFEIAHNHIHALVGGTEPYSMSSLEYTTFDPIFILHHSNVDRIWAIWQALQKFRGHRYNSANCAIETLRKPMSPFSLTSDINIDPMTREHSVPFDVFDYKKNFHYEYDLLELNGLSIPQLHREISRRRAKSRIFATFMLEGIKQSALVEYYIRAHGSTDQLKAGEFYILGSANEMPWKFDRVYKADITQQMKEANLHFNDQYHIEYHLKDLSGNEIAGVHLETAIIYEPGLGNFGEAGIWVEPVTSANRIRKNLNALTDGDMESLRKAFKDMTTDGRYEEIASFHGLPAQCPNKDGSKVYTCCIHGMPTFPHWHRLYVALVENELLARGSGVAVPYWDWVQPFDHLPALVNRATYYNSRTLLVEPNPFFKGKISFLNSETNRDPQEELFGNKYLYEHTLFVLEQTDFCDFEVHFEVLHNTIHSWLGGRDPHSMSSLDFAAYDPIFFLHHSNIDRIWAIWQELQRYRKLPYNEANCALPLLNVPMRPFSNTTANHDRMTLTHSAPNDVFDYQNVLHYKYDTLSFYDLTITQLDHLIEERKSHDRIFAGFLLHGVQASADIHVFICVPTSKHEENCAHDVGVFSVLGGKSEMPWQFASVFQYEITDQLKLLGLNQNSHFRGVTEVTAVNGSSINSDIFPHPTIIYVPKQDHSADIKSEEGNEYLVRKNVERLSLSEMNSLIHAFRRMQRDKSSDGFEAIASFHALPPLCPSPTAKHRHACCLHGMATFPHWHRLYVVQFEQALHRHGATVGVPYWDWTRPISKIPDFIASKRYSDPFTKIEDYNPFNQGQISFISEDTETKREVSEYLFEHPVLGKQTWLFDNIALALEQTDYCDFEIQLEIVHNAIHSWIGGKEEHSLNHLHYAAYDPIFYLHHSNVDRLWVIWQELQKLRGLNAYESHCALELMKVPLKPFSFGAPYNLNDLTTKLSKPEDMFRYKDNFHYEYDILDINSMSINQIESSYIRHQRDHDRVFAGFLLSGFGSSAYATFEICIEGGECHEGSHFSVLGGSTEMPWAFDRLYKIEITDILSDMNLAFDSAFTIKTKLVAQNGTELPASILPEATVIRIPPSNEDADIDTPLNHIRRNVESLDERDIQNLMAALTRVKEDESDHGFQTIASYHGSTLCPSPEEPKYACCLHGMPVFPHWHRVYLLHFEDSMRRHGSSVATPYWDWTQPGTKLPRLLADSDYYDAWTDNVTENPFLRGYIKTEDTYTVRDVKPELFEIGGGEGSTLYQQVLLMLEQEDYCDFEVQFEVVHNSIHYLVGGHQKYAMSSLVYSSFDPIFYVHHSMVDRLWAIWQALQEHRHLPFDKAYCALEQLSFPMKPFVWESNPNLHTRAASTPQHLFDDNKLGYKYDNLEFHGMNIDQLENAIHKQQNKDRVFASFLLFGIKTSADVHLKLCKDETCEDAGVVFILGGDNEMPWHFDRTYKKDITHVLHQMHIPLEDLYVHGSTILLEVEIETVDGKVLDSSSLPAPSMIYVPAKDFKREVHKKTVGDAIIRKNVNSLTPSDIKELRDAMAKVQADTSDNGYQKIASYHGIPLSCHYENGTAYACCQHGMVTFPNWHRLLTKQMEDALVAKGSHVGIPYWDWTTTFANLPVLVTEEKDNSFHHAHIDVANTDTTRSPRAQLFDDPDKGDKSFFYRQIALALEQTDFCDFEIQFEIGHNAIHSWVGGSSPYGMSTLHYTSYDPLFYLHHSNTDRIWSVWQALQKYRGLPYNTANCEINKLVKPLKPFNLDTNPNAVTKAHSTGATSFDYHKLGYDYDNLNFHGMTIPELEEHLKEIQHEDRVFAGFLLRTIGQSADVNFDVCTKDGECTFGGTFCILGGEHEMFWAFDRPFKYDITTSLKHLRLDAHDDFDIKVTIKGIDGHVLSNKYLSPPTVFLAPAKTTH.

The functional unit Oda stretch occupies residues 1–419; that stretch reads NLIRKDVDAL…ADMVVVDKTG (419 aa). His-41 lines the Cu cation pocket. Residues Cys-47 and Cys-57 are joined by a disulfide bond. The segment at residues 58-60 is a cross-link (2'-(S-cysteinyl)-histidine (Cys-His)); it reads CLH. Cu cation contacts are provided by His-60, His-69, His-178, His-182, and His-209. 2 cysteine pairs are disulfide-bonded: Cys-168–Cys-234 and Cys-321–Cys-333. Residue Asn-386 is glycosylated (N-linked (GlcNAc...) asparagine). The functional unit Odb stretch occupies residues 420-834; that stretch reads LNVRKDLQSL…KESGVVFDEL (415 aa). Position 460 (His-460) interacts with Cu cation. A disulfide bridge links Cys-466 with Cys-477. The 2'-(S-cysteinyl)-histidine (Cys-His) cross-link spans 478–480; it reads CVH. Residues His-480, His-489, His-601, His-605, and His-632 each contribute to the Cu cation site. Cys-591 and Cys-657 are joined by a disulfide. N-linked (GlcNAc...) asparagine glycosylation occurs at Asn-804. Residues 835–1254 form a functional unit Odc region; sequence YRSRRDVSSL…GIWVEPVTSA (420 aa). Cu cation is bound at residue His-875. Cys-881 and Cys-892 are oxidised to a cystine. Positions 893–895 form a cross-link, 2'-(S-cysteinyl)-histidine (Cys-His); the sequence is CHH. Cu cation contacts are provided by His-895, His-904, His-1013, His-1017, His-1044, and His-1292. The cysteines at positions 1003 and 1070 are disulfide-linked. The segment at 1255 to 1667 is functional unit Odd; that stretch reads NRIRKNLNAL…ADIKSEEGNE (413 aa). A disulfide bridge links Cys-1298 with Cys-1309. The 2'-(S-cysteinyl)-histidine (Cys-His) cross-link spans 1310 to 1312; it reads CIH. Residues His-1312, His-1321, His-1425, His-1429, and His-1456 each coordinate Cu cation. A disulfide bridge links Cys-1415 with Cys-1482. Asn-1496 carries an N-linked (GlcNAc...) asparagine glycan. Cys-1571 and Cys-1581 form a disulfide bridge. N-linked (GlcNAc...) asparagine glycosylation is present at Asn-1634. Residues 1668–2085 are functional unit Ode; that stretch reads YLVRKNVERL…NEDADIDTPL (418 aa). His-1708 is a Cu cation binding site. Cys-1714 and Cys-1725 are oxidised to a cystine. Residues 1726 to 1728 constitute a cross-link (2'-(S-cysteinyl)-histidine (Cys-His)); sequence CLH. His-1728, His-1737, His-1849, His-1853, and His-1880 together coordinate Cu cation. 2 cysteine pairs are disulfide-bonded: Cys-1839/Cys-1906 and Cys-1997/Cys-2003. N-linked (GlcNAc...) asparagine glycosylation is present at Asn-2055. The segment at 2086–2502 is functional unit Odf; sequence NHIRRNVESL…REVHKKTVGD (417 aa). His-2126 provides a ligand contact to Cu cation. A disulfide bridge connects residues Cys-2131 and Cys-2141. Positions 2142-2144 form a cross-link, 2'-(S-cysteinyl)-histidine (Cys-His); sequence CLH. His-2144 and His-2153 together coordinate Cu cation. A glycan (N-linked (GlcNAc...) asparagine) is linked at Asn-2201. Intrachain disulfides connect Cys-2252-Cys-2319 and Cys-2406-Cys-2411. Cu cation contacts are provided by His-2262, His-2266, and His-2293. Residues 2503–2896 form a functional unit Odg region; it reads AIIRKNVNSL…VFLAPAKTTH (394 aa). His-2543 contacts Cu cation. The cysteines at positions 2549 and 2559 are disulfide-linked. A glycan (N-linked (GlcNAc...) asparagine) is linked at Asn-2553. Residues 2560 to 2562 constitute a cross-link (2'-(S-cysteinyl)-histidine (Cys-His)); it reads CQH. Cu cation is bound by residues His-2562, His-2571, His-2671, His-2675, and His-2702. Cystine bridges form between Cys-2661–Cys-2728 and Cys-2815–Cys-2821.

This sequence belongs to the tyrosinase family. Hemocyanin subfamily. In terms of assembly, decamers of large identical subunits (350 kDa), each containing 7 globular oxygen-binding functional units: ODA, ODB, ODC, ODD, ODE, ODF, and ODG. Decamer formation requires the presence of magnesium ions. Cu(2+) is required as a cofactor.

Its function is as follows. Hemocyanins are copper-containing oxygen carriers occurring freely dissolved in the hemolymph of many mollusks and arthropods. The protein is Hemocyanin G-type, units Oda to Odg (ODHCY) of Enteroctopus dofleini (North Pacific giant octopus).